The primary structure comprises 281 residues: Bis(5'-nucleosyl)-tetraphosphatase, symmetrical (281 aa).

It belongs to the Ap4A hydrolase family.

It catalyses the reaction P(1),P(4)-bis(5'-adenosyl) tetraphosphate + H2O = 2 ADP + 2 H(+). Hydrolyzes diadenosine 5',5'''-P1,P4-tetraphosphate to yield ADP. The polypeptide is Bis(5'-nucleosyl)-tetraphosphatase, symmetrical (Acidovorax ebreus (strain TPSY) (Diaphorobacter sp. (strain TPSY))).